A 283-amino-acid polypeptide reads, in one-letter code: Pantothenate synthetase (283 aa).

26–33 (MGNLHEGH) serves as a coordination point for ATP. H33 (proton donor) is an active-site residue. Q57 contacts (R)-pantoate. Residue Q57 participates in beta-alanine binding. 144–147 (GKKD) serves as a coordination point for ATP. Q150 lines the (R)-pantoate pocket. 181–184 (LSSR) is an ATP binding site.

It belongs to the pantothenate synthetase family. As to quaternary structure, homodimer.

The protein localises to the cytoplasm. It catalyses the reaction (R)-pantoate + beta-alanine + ATP = (R)-pantothenate + AMP + diphosphate + H(+). It functions in the pathway cofactor biosynthesis; (R)-pantothenate biosynthesis; (R)-pantothenate from (R)-pantoate and beta-alanine: step 1/1. Functionally, catalyzes the condensation of pantoate with beta-alanine in an ATP-dependent reaction via a pantoyl-adenylate intermediate. This Variovorax paradoxus (strain S110) protein is Pantothenate synthetase.